Consider the following 668-residue polypeptide: UvrABC system protein B (668 aa).

The Helicase ATP-binding domain occupies 36 to 423 (DNIKGGEKAQ…TETVVEQIIR (388 aa)). Position 49-56 (49-56 (GATGTGKT)) interacts with ATP. Positions 102-125 (YYDYYQPEAYVPSSDTYIEKDSSI) match the Beta-hairpin motif. Positions 440–606 (QMDDLLGEIN…TIKKEIRDLI (167 aa)) constitute a Helicase C-terminal domain. In terms of domain architecture, UVR spans 632 to 667 (QEAIKKLQKQMHEAAELLDFELAAQIRDMVLELKSM).

It belongs to the UvrB family. Forms a heterotetramer with UvrA during the search for lesions. Interacts with UvrC in an incision complex.

It is found in the cytoplasm. Its function is as follows. The UvrABC repair system catalyzes the recognition and processing of DNA lesions. A damage recognition complex composed of 2 UvrA and 2 UvrB subunits scans DNA for abnormalities. Upon binding of the UvrA(2)B(2) complex to a putative damaged site, the DNA wraps around one UvrB monomer. DNA wrap is dependent on ATP binding by UvrB and probably causes local melting of the DNA helix, facilitating insertion of UvrB beta-hairpin between the DNA strands. Then UvrB probes one DNA strand for the presence of a lesion. If a lesion is found the UvrA subunits dissociate and the UvrB-DNA preincision complex is formed. This complex is subsequently bound by UvrC and the second UvrB is released. If no lesion is found, the DNA wraps around the other UvrB subunit that will check the other stand for damage. The polypeptide is UvrABC system protein B (Streptococcus thermophilus (strain CNRZ 1066)).